Reading from the N-terminus, the 223-residue chain is MGRKVNPIGFRLGIVHDWESKWFAEKDRQYREQLHEDLDIRELVHRELPRAGISRIEIQRAVNRVDVTIHTAKPGVVIGKQGANVERLRQLLESRIGKKVHLNIQEIRKPELDARLVAESIAEQITRRVSYRRAMKHAAAAAMRAGAKGVKIRVKGRLGGAEMKRMVWEIVGRVPLNTIRANIDYAVVHAPTIYGQIGVKVWIYHGDVLPEARPPIAAGVVAE.

Residues 40–108 enclose the KH type-2 domain; sequence IRELVHRELP…KVHLNIQEIR (69 aa).

This sequence belongs to the universal ribosomal protein uS3 family. In terms of assembly, part of the 30S ribosomal subunit. Forms a tight complex with proteins S10 and S14.

Its function is as follows. Binds the lower part of the 30S subunit head. Binds mRNA in the 70S ribosome, positioning it for translation. The protein is Small ribosomal subunit protein uS3 of Thermomicrobium roseum (strain ATCC 27502 / DSM 5159 / P-2).